Reading from the N-terminus, the 184-residue chain is ATP synthase subunit b, chloroplastic (184 aa).

The helical transmembrane segment at 27–49 (LATNPINLSVVLGVLIFFGKGVL) threads the bilayer.

Belongs to the ATPase B chain family. In terms of assembly, F-type ATPases have 2 components, F(1) - the catalytic core - and F(0) - the membrane proton channel. F(1) has five subunits: alpha(3), beta(3), gamma(1), delta(1), epsilon(1). F(0) has four main subunits: a(1), b(1), b'(1) and c(10-14). The alpha and beta chains form an alternating ring which encloses part of the gamma chain. F(1) is attached to F(0) by a central stalk formed by the gamma and epsilon chains, while a peripheral stalk is formed by the delta, b and b' chains.

The protein resides in the plastid. It is found in the chloroplast thylakoid membrane. Functionally, f(1)F(0) ATP synthase produces ATP from ADP in the presence of a proton or sodium gradient. F-type ATPases consist of two structural domains, F(1) containing the extramembraneous catalytic core and F(0) containing the membrane proton channel, linked together by a central stalk and a peripheral stalk. During catalysis, ATP synthesis in the catalytic domain of F(1) is coupled via a rotary mechanism of the central stalk subunits to proton translocation. In terms of biological role, component of the F(0) channel, it forms part of the peripheral stalk, linking F(1) to F(0). The sequence is that of ATP synthase subunit b, chloroplastic from Buxus microphylla (Littleleaf boxwood).